The following is a 498-amino-acid chain: Lysine--tRNA ligase (498 aa).

Positions 408 and 415 each coordinate Mg(2+).

It belongs to the class-II aminoacyl-tRNA synthetase family. As to quaternary structure, homodimer. The cofactor is Mg(2+).

The protein resides in the cytoplasm. The catalysed reaction is tRNA(Lys) + L-lysine + ATP = L-lysyl-tRNA(Lys) + AMP + diphosphate. The sequence is that of Lysine--tRNA ligase from Listeria innocua serovar 6a (strain ATCC BAA-680 / CLIP 11262).